The sequence spans 1755 residues: Transposon Ty1-PL Gag-Pol polyprotein (1755 aa).

Composition is skewed to polar residues over residues M1–S23, T48–S60, and Q127–F152. 3 disordered regions span residues M1 to Q93, P126 to M174, and G352 to T421. Low complexity predominate over residues T153–T165. The interval N299–H401 is RNA-binding. Residues N402–S418 show a composition bias toward low complexity. S416 bears the Phosphoserine mark. Residue D461 is the For protease activity; shared with dimeric partner of the active site. The integrase-type zinc finger-like stretch occupies residues N583 to C640. An Integrase catalytic domain is found at N660–P835. The Mg(2+) site is built by D671 and D736. 3 disordered regions span residues S956 to K1087, R1092 to P1111, and D1130 to T1187. Positions S960–T969 are enriched in low complexity. The segment covering S1005–T1015 has biased composition (polar residues). A compositionally biased stretch (basic and acidic residues) spans E1038–S1053. Composition is skewed to polar residues over residues Y1054–D1082 and P1101–P1111. A Bipartite nuclear localization signal motif is present at residues K1178–R1212. Positions N1338–Q1476 constitute a Reverse transcriptase Ty1/copia-type domain. Mg(2+) is bound by residues D1346, D1427, D1428, D1610, E1652, and D1685. One can recognise an RNase H Ty1/copia-type domain in the interval D1610 to K1752.

As to quaternary structure, the capsid protein forms a homotrimer, from which the VLPs are assembled. The protease is a homodimer, whose active site consists of two apposed aspartic acid residues. Initially, virus-like particles (VLPs) are composed of the structural unprocessed proteins Gag and Gag-Pol, and also contain the host initiator methionine tRNA (tRNA(i)-Met) which serves as a primer for minus-strand DNA synthesis, and a dimer of genomic Ty RNA. Processing of the polyproteins occurs within the particle and proceeds by an ordered pathway, called maturation. First, the protease (PR) is released by autocatalytic cleavage of the Gag-Pol polyprotein yielding capsid protein p45 and a Pol-p154 precursor protein. This cleavage is a prerequisite for subsequent processing of Pol-p154 at the remaining sites to release the mature structural and catalytic proteins. Maturation takes place prior to the RT reaction and is required to produce transposition-competent VLPs.

The protein localises to the cytoplasm. Its subcellular location is the nucleus. The catalysed reaction is DNA(n) + a 2'-deoxyribonucleoside 5'-triphosphate = DNA(n+1) + diphosphate. It carries out the reaction Endonucleolytic cleavage to 5'-phosphomonoester.. Capsid protein (CA) is the structural component of the virus-like particle (VLP), forming the shell that encapsulates the retrotransposons dimeric RNA genome. The particles are assembled from trimer-clustered units and there are holes in the capsid shells that allow for the diffusion of macromolecules. CA also has nucleocapsid-like chaperone activity, promoting primer tRNA(i)-Met annealing to the multipartite primer-binding site (PBS), dimerization of Ty1 RNA and initiation of reverse transcription. In terms of biological role, the aspartyl protease (PR) mediates the proteolytic cleavages of the Gag and Gag-Pol polyproteins after assembly of the VLP. Functionally, reverse transcriptase/ribonuclease H (RT) is a multifunctional enzyme that catalyzes the conversion of the retro-elements RNA genome into dsDNA within the VLP. The enzyme displays a DNA polymerase activity that can copy either DNA or RNA templates, and a ribonuclease H (RNase H) activity that cleaves the RNA strand of RNA-DNA heteroduplexes during plus-strand synthesis and hydrolyzes RNA primers. The conversion leads to a linear dsDNA copy of the retrotransposon that includes long terminal repeats (LTRs) at both ends. Its function is as follows. Integrase (IN) targets the VLP to the nucleus, where a subparticle preintegration complex (PIC) containing at least integrase and the newly synthesized dsDNA copy of the retrotransposon must transit the nuclear membrane. Once in the nucleus, integrase performs the integration of the dsDNA into the host genome. The chain is Transposon Ty1-PL Gag-Pol polyprotein (TY1B-PL) from Saccharomyces cerevisiae (strain ATCC 204508 / S288c) (Baker's yeast).